The primary structure comprises 323 residues: Ankyrin repeat and SOCS box protein 11 (323 aa).

6 ANK repeats span residues 64 to 93 (ADRS…NVNL), 97 to 126 (NRVS…HVNG), 130 to 159 (HGAT…KAQF), 162 to 191 (HLAS…NIDH), 195 to 224 (QLGT…SVDH), and 227 to 256 (WLDT…NLKR). Positions 274–323 (VEQALLLCEGPPALSQLCRLCVRKCLGRACHQAIHKLHLPEPLERFLLYQ) constitute an SOCS box domain.

This sequence belongs to the ankyrin SOCS box (ASB) family. In terms of assembly, substrate-recognition component of the ECS(ASB11) complex, composed of ASB11, CUL5, ELOB, ELOC and RNF7/RBX2.

It is found in the endoplasmic reticulum. It participates in protein modification; protein ubiquitination. Functionally, substrate-recognition component of a cullin-5-RING E3 ubiquitin-protein ligase complex (ECS complex, also named CRL5 complex), which mediates the ubiquitination and subsequent proteasomal degradation of target proteins, such as BIK, DIRAS2 and RPN1. The ECS(ASB11) complex acts as a regulator of the endoplasmic reticulum unfolded protein response by mediating ubiquitination and degradation of BIK. This is Ankyrin repeat and SOCS box protein 11 (ASB11) from Pongo abelii (Sumatran orangutan).